The primary structure comprises 99 residues: uncharacterized protein (99 aa).

This is an uncharacterized protein from Saccharomyces cerevisiae (strain ATCC 204508 / S288c) (Baker's yeast).